A 214-amino-acid chain; its full sequence is Coiled-coil domain-containing protein 169 (214 aa).

A coiled-coil region spans residues 29–154; that stretch reads DAVQLSIFEL…NERRTYLAEM (126 aa). Over residues 155-170 the composition is skewed to polar residues; the sequence is SQGSGLHQVSKRQQVD. Residues 155-214 are disordered; that stretch reads SQGSGLHQVSKRQQVDQLPRMQENLVKTGRYNPAKQKTVSAKRGPVKKITRPNHLPELHP.

Belongs to the CCDC169 family.

In Homo sapiens (Human), this protein is Coiled-coil domain-containing protein 169 (CCDC169).